The following is a 424-amino-acid chain: 5,5'-dehydrodivanillate O-demethylase oxygenase subunit (424 aa).

Positions 27 to 135 (WHPIGGESEF…VRALGGLLWA (109 aa)) constitute a Rieske domain. The [2Fe-2S] cluster site is built by C68, H70, C87, and H90. Fe cation contacts are provided by H181, H186, and D306.

The protein belongs to the bacterial ring-hydroxylating dioxygenase alpha subunit family. Homotrimer. The three-component monooxygenase is composed of an oxygenase (LigXa), a ferredoxin (LigXc) and a ferredoxin reductase (LigXd). The cofactor is [2Fe-2S] cluster. Requires Fe cation as cofactor.

It catalyses the reaction 5,5'-dehydrodivanillate + NADH + O2 + H(+) = 2,2',3-trihydroxy-3'-methoxy-5,5'-dicarboxybiphenyl + formaldehyde + NAD(+) + H2O. Functionally, involved in the catabolism of 5,5'-dehydrodivanillate (DDVA), an intermediate in the biodegradation of lignin. Part of a three-component monooxygenase that catalyzes the O-demethylation of DDVA, leading to the formation of 2,2',3-trihydroxy-3'-methoxy-5,5'-dicarboxybiphenyl (OH-DDVA). This Sphingobium sp. (strain NBRC 103272 / SYK-6) protein is 5,5'-dehydrodivanillate O-demethylase oxygenase subunit.